The primary structure comprises 148 residues: Small ribosomal subunit protein uS15 (148 aa).

The disordered stretch occupies residues 1-23; sequence MRKSKEKGRSGSTRPPQLKKPEW.

The protein belongs to the universal ribosomal protein uS15 family. As to quaternary structure, part of the 30S ribosomal subunit.

The polypeptide is Small ribosomal subunit protein uS15 (Thermofilum pendens (strain DSM 2475 / Hrk 5)).